A 396-amino-acid chain; its full sequence is MAQLLDSPGFIERSAAVPHKAAAAPATRDAAAPAAVPGAAVSFELVGKVFDGPRGPAAALREVTLDIARGGVFGVIGRSGAGKSTLLRLVNGLERPTSGAVRVNGVDVGTLDERGLVALRRRIGMVFQHFNLLSAKTVAQNIGLPLKIAGVPKAERARKVDALLDLVGLAAKRDAYPASLSGGQKQRVGIARALVHDPALLLCDEATSALDPETTQSILALLADINRRLGLTIMLITHEMEVIRAVCDTVAVVEQGEVVETGPVWRVFGDPRHGATRALLRTLAHDLPADLAAHVRPLDGAAPLPCGAQLLLDVRYTGASGGEPDLGALTAALARNVGDAVHFVHGGLDRIQGRVQGRLVIAASLAARGAAGPDRIAAALAAARRHANRVEVLGYV.

Positions 41–280 (VSFELVGKVF…PRHGATRALL (240 aa)) constitute an ABC transporter domain. Residue 77–84 (GRSGAGKS) participates in ATP binding.

The protein belongs to the ABC transporter superfamily. Methionine importer (TC 3.A.1.24) family. The complex is composed of two ATP-binding proteins (MetN), two transmembrane proteins (MetI) and a solute-binding protein (MetQ).

The protein resides in the cell inner membrane. The catalysed reaction is L-methionine(out) + ATP + H2O = L-methionine(in) + ADP + phosphate + H(+). It carries out the reaction D-methionine(out) + ATP + H2O = D-methionine(in) + ADP + phosphate + H(+). Its function is as follows. Part of the ABC transporter complex MetNIQ involved in methionine import. Responsible for energy coupling to the transport system. This Burkholderia mallei (strain ATCC 23344) protein is Methionine import ATP-binding protein MetN 2.